A 759-amino-acid chain; its full sequence is Mitogen-activated protein kinase kinase kinase 1a (759 aa).

Composition is skewed to basic and acidic residues over residues methionine 1 to serine 17, serine 25 to lysine 36, and alanine 52 to serine 64. Disordered regions lie at residues methionine 1–lysine 90, leucine 122–phenylalanine 160, serine 165–methionine 184, and arginine 195–leucine 239. A compositionally biased stretch (low complexity) spans valine 72–serine 85. Residues tryptophan 426–isoleucine 679 form the Protein kinase domain. ATP-binding positions include leucine 432–valine 440 and lysine 454. The Proton acceptor role is filled by aspartate 549.

The protein belongs to the protein kinase superfamily. STE Ser/Thr protein kinase family. MAP kinase kinase kinase subfamily.

It is found in the cell membrane. The catalysed reaction is L-seryl-[protein] + ATP = O-phospho-L-seryl-[protein] + ADP + H(+). It carries out the reaction L-threonyl-[protein] + ATP = O-phospho-L-threonyl-[protein] + ADP + H(+). Its function is as follows. The CERK1, MEKK1a/b, MKK1a/b/c and MPK4a/b proteins are involved in pathogen defense. The pathway induces rapid growth inhibition, cell wall depositions and accumulation of defense-related transcripts. This protein is required for responses to chitin and acts redundantly with MEKK1b. The chain is Mitogen-activated protein kinase kinase kinase 1a from Physcomitrium patens (Spreading-leaved earth moss).